Reading from the N-terminus, the 436-residue chain is C4-dicarboxylate transport protein 2 (436 aa).

Transmembrane regions (helical) follow at residues 14-34 (VLVA…TAVA), 45-65 (LIKM…IAGM), 77-97 (MALL…LVVV), 142-162 (VVGA…VLFG), 198-218 (PIGA…GSLV), 223-243 (LMLC…GGIA), 290-310 (VVGL…SIYL), 331-351 (ITLL…TGSG), and 353-373 (IVLA…LALI). Positions 414–436 (ELAGEGNASSPASDIPVGGREAV) are disordered.

The protein belongs to the dicarboxylate/amino acid:cation symporter (DAACS) (TC 2.A.23) family.

Its subcellular location is the cell inner membrane. In terms of biological role, responsible for the transport of dicarboxylates such as succinate, fumarate, and malate from the periplasm across the membrane. The sequence is that of C4-dicarboxylate transport protein 2 from Pseudomonas aeruginosa (strain UCBPP-PA14).